The following is a 167-amino-acid chain: NADH-quinone oxidoreductase subunit B 2 (167 aa).

[4Fe-4S] cluster contacts are provided by Cys-38, Cys-39, Cys-103, and Cys-132.

This sequence belongs to the complex I 20 kDa subunit family. NDH-1 is composed of 14 different subunits. Subunits NuoB, C, D, E, F, and G constitute the peripheral sector of the complex. Requires [4Fe-4S] cluster as cofactor.

Its subcellular location is the cell inner membrane. The catalysed reaction is a quinone + NADH + 5 H(+)(in) = a quinol + NAD(+) + 4 H(+)(out). NDH-1 shuttles electrons from NADH, via FMN and iron-sulfur (Fe-S) centers, to quinones in the respiratory chain. The immediate electron acceptor for the enzyme in this species is believed to be ubiquinone. Couples the redox reaction to proton translocation (for every two electrons transferred, four hydrogen ions are translocated across the cytoplasmic membrane), and thus conserves the redox energy in a proton gradient. In Rhizobium meliloti (strain 1021) (Ensifer meliloti), this protein is NADH-quinone oxidoreductase subunit B 2.